The sequence spans 415 residues: Gamma-glutamyl phosphate reductase (415 aa).

This sequence belongs to the gamma-glutamyl phosphate reductase family.

It localises to the cytoplasm. The catalysed reaction is L-glutamate 5-semialdehyde + phosphate + NADP(+) = L-glutamyl 5-phosphate + NADPH + H(+). Its pathway is amino-acid biosynthesis; L-proline biosynthesis; L-glutamate 5-semialdehyde from L-glutamate: step 2/2. Catalyzes the NADPH-dependent reduction of L-glutamate 5-phosphate into L-glutamate 5-semialdehyde and phosphate. The product spontaneously undergoes cyclization to form 1-pyrroline-5-carboxylate. The polypeptide is Gamma-glutamyl phosphate reductase (Ligilactobacillus salivarius (strain UCC118) (Lactobacillus salivarius)).